The sequence spans 194 residues: RNA polymerase II subunit A C-terminal domain phosphatase SSU72 like protein 2 (194 aa).

Belongs to the SSU72 phosphatase family.

The protein localises to the nucleus. The catalysed reaction is O-phospho-L-seryl-[protein] + H2O = L-seryl-[protein] + phosphate. The enzyme catalyses O-phospho-L-threonyl-[protein] + H2O = L-threonyl-[protein] + phosphate. Its function is as follows. Protein phosphatase that catalyzes the dephosphorylation of the C-terminal domain of RNA polymerase II. Plays a role in RNA processing and termination. In Homo sapiens (Human), this protein is RNA polymerase II subunit A C-terminal domain phosphatase SSU72 like protein 2.